The sequence spans 197 residues: Recombination protein RecR (197 aa).

The segment at 56–71 (CPVCGTLDTRAPCSIC) adopts a C4-type zinc-finger fold. The 96-residue stretch at 79–174 (TLICVVRDVA…TVSGLAQGVP (96 aa)) folds into the Toprim domain.

Belongs to the RecR family.

In terms of biological role, may play a role in DNA repair. It seems to be involved in an RecBC-independent recombinational process of DNA repair. It may act with RecF and RecO. This Rhodospirillum rubrum (strain ATCC 11170 / ATH 1.1.1 / DSM 467 / LMG 4362 / NCIMB 8255 / S1) protein is Recombination protein RecR.